The chain runs to 156 residues: Ribosomal RNA large subunit methyltransferase H (156 aa).

Residues Leu-73, Gly-104, and 123 to 128 each bind S-adenosyl-L-methionine; that span reads LSAMTL.

This sequence belongs to the RNA methyltransferase RlmH family. In terms of assembly, homodimer.

The protein localises to the cytoplasm. It catalyses the reaction pseudouridine(1915) in 23S rRNA + S-adenosyl-L-methionine = N(3)-methylpseudouridine(1915) in 23S rRNA + S-adenosyl-L-homocysteine + H(+). Functionally, specifically methylates the pseudouridine at position 1915 (m3Psi1915) in 23S rRNA. This Laribacter hongkongensis (strain HLHK9) protein is Ribosomal RNA large subunit methyltransferase H.